The chain runs to 423 residues: O-methyltransferase aoiF (423 aa).

Asp-273 lines the S-adenosyl-L-methionine pocket. His-324 acts as the Proton acceptor in catalysis.

The protein belongs to the class I-like SAM-binding methyltransferase superfamily. Cation-independent O-methyltransferase family.

It functions in the pathway secondary metabolite biosynthesis. O-methyltransferase; part of the gene cluster that mediates the biosynthesis of a methylated derivative of known natural products orthosporin and diaporthin. Within the pathway, aoiF catalyzes the biotransformation of orthosporin to diaporthin but also of diaporthin to the final product, by performing a tandem methylation of the polyketide core. Orthosporin is produced by an oxidoreductase that has still to be identified and that catalyzes the stereospecific reduction of the carbonyl moiety of the hexaketide isocoumarin scaffold produced by the non-reducing polyketide synthase aoiG to generate the S-configured secondary alcohol at C-11. The protein is O-methyltransferase aoiF of Aspergillus oryzae (strain ATCC 42149 / RIB 40) (Yellow koji mold).